A 56-amino-acid polypeptide reads, in one-letter code: Large ribosomal subunit protein bL33 (56 aa).

It belongs to the bacterial ribosomal protein bL33 family.

The polypeptide is Large ribosomal subunit protein bL33 (Marinomonas sp. (strain MWYL1)).